The sequence spans 646 residues: MAQISLTFPDGNAREFPAGITPAEVAASISTSLGKKAISASVDGRHYDLQWPIEADAKIAIHTMADEAQALELIRHDLAHIMARAVQELWPDVKVTIGPVVANGWYYDFDREETFTPEDLGAIEKRMKEIINARDAVRTETWDRDRAIAHYEARGENFKVELVQAIPADQQIRMYWHGNWQDLCRGPHLQHTGQVPADAFQLMSVAGAYWRGDSNNKQLQRIYGVAFKTRDELKAYLHMLEEAAKRDHRKLGKEMELFHLQEEAPGMVFWHPNGWQIYRTLEDYMRGRLRKAGYKEIRTPQVVDRKLWEASGHWEAYKENMFLVEVEEEHAKEKRINALKPMNCPCHVQVYNQGLKSYRDLPLRLAEFGSCHRYESSGSMHGLMRVRGFVQDDAHIFCTEDQIEGECAAFIELLSSVYKDLGFDSFEIKLSTRPEVRIGSDEAWDKVETALENAIKKVGAAYEIDPGEGAFYGPKLDFKLTDAIGRKWQCGTFQVDPNLPTRLGAEYIGEDGAKHRPYMLHRAILGSFERFIGILIENYAGKLPFWLAPRQVVVASIVSDADPYVAEVVAALRARGVRAEADTRNEKINYKVREHSVGKVPVILAIGMQEVEGRTVSVRRLGETGTESAPLDQVVERLATDARIPG.

In terms of domain architecture, TGS spans 1–63 (MAQISLTFPD…EADAKIAIHT (63 aa)). Residues 247 to 544 (DHRKLGKEME…LIENYAGKLP (298 aa)) form a catalytic region. Cys344, His395, and His521 together coordinate Zn(2+).

Belongs to the class-II aminoacyl-tRNA synthetase family. As to quaternary structure, homodimer. Zn(2+) is required as a cofactor.

Its subcellular location is the cytoplasm. The enzyme catalyses tRNA(Thr) + L-threonine + ATP = L-threonyl-tRNA(Thr) + AMP + diphosphate + H(+). Catalyzes the attachment of threonine to tRNA(Thr) in a two-step reaction: L-threonine is first activated by ATP to form Thr-AMP and then transferred to the acceptor end of tRNA(Thr). Also edits incorrectly charged L-seryl-tRNA(Thr). In Cereibacter sphaeroides (strain ATCC 17025 / ATH 2.4.3) (Rhodobacter sphaeroides), this protein is Threonine--tRNA ligase.